The following is a 526-amino-acid chain: MVEYNVTSTTLEPKTGWPVVDRLLGGYTELETLNGQVVARCLVAIILCRFIAVWSYNLWFHPLARFPGPFLGRCSLLYRFIHSSRGRIHSAVADAHKKYGDIVRIAPNELSFASVESWKAIYGHPTRGNEIAPKGPFYEVFAAGFNSKCVGSERNPEKHALMRKMLNPAFSQRGLLEQEEIISGTIDKFVHVLGEKAGPGTKGLNMTKWYEMNSFDILGEMAFGESFHSLDTGIPHFWADVVLEHLYIITLLDNLRRIGWLAKLAGLLIPASLVTKNQNSNYSRQQVEKRLGIQKSRNDFVSLLVDKVRAGEVSKEEMTAHVSTITIAGGETVATTLSGLTCFLAQNPDKLERLTKEIRAAFKTFEEINAVKSQQIPYLQAVINEGLRLFPPASGGAPRVSPGFTLHDKYIPKGTEVNVSPWSITHNAKYFSDPWEFKPERWLDPNSKDIKDASRPFLLGPRDCLGRNFALMELNLVLAKLLWSYDMELVNKEINFLEQSTVHVLWWKPGLFVRWHKPQSPGFSPS.

Residue asparagine 5 is glycosylated (N-linked (GlcNAc...) asparagine). A helical transmembrane segment spans residues cysteine 41–histidine 61. 2 N-linked (GlcNAc...) asparagine glycosylation sites follow: asparagine 205 and asparagine 281. Heme is bound at residue cysteine 464.

It belongs to the cytochrome P450 family. Heme is required as a cofactor.

The protein resides in the membrane. The protein operates within secondary metabolite biosynthesis. Cytochrome P450 monooxygenase; part of the gene cluster that mediates the biosynthesis of botrydial. Botrydial is necessary for colonization of plant tissue by the T4 strain. It is a strain-dependent virulence factor since highly aggressive strains like SAS56 or B05 still retain substantial virulence when botrydial synthesis is impaired, since they produce also botcinic acid. The first step of botrydial biosynthesis is performed by the sesquiterpene synthase BOT2 which catalyzes the cyclization of farnesyl diphosphate (FPP) to presilphiperfolan-8-beta-ol (PSP). The cytochrome P450 monooxygenase BOT4 then catalyzes the hydroxylation at C-4 to give a probotryane intermediate. Acetylation of the hydroxyl at C-4 is carried out by the acetyltransferase BOT5, followed by the combined action of the P450 monooxygenases BOT3 and BOT1, to yield finally the glycol, via the regio- and stereospecific hydroxylations at C-10 and C-15 of the probotryane intermediates, respectively. The cleavage of the C10-C15 bond of probotryane skeleton is an intriguing and chemically important reaction, which could be mediated by some of the monooxygenases or by a combination of them. It is possible that either BOT3 or BOT1 would oxidize either the 10- or the 15-hydroxy group to the hydroperoxide derivative, which would then undergo heterolytic fragmentation to give the dialdehyde botrydial. Finally, the dehydrogenase BOT7 might be involved in the conversion of botrydial to dihydrobotrydial. The polypeptide is Cytochrome P450 monooxygenase BOT4 (Botryotinia fuckeliana (Noble rot fungus)).